A 285-amino-acid polypeptide reads, in one-letter code: Ribosomal protein L11 methyltransferase (285 aa).

S-adenosyl-L-methionine contacts are provided by T131, G154, D176, and N223.

The protein belongs to the methyltransferase superfamily. PrmA family.

It localises to the cytoplasm. The catalysed reaction is L-lysyl-[protein] + 3 S-adenosyl-L-methionine = N(6),N(6),N(6)-trimethyl-L-lysyl-[protein] + 3 S-adenosyl-L-homocysteine + 3 H(+). In terms of biological role, methylates ribosomal protein L11. The chain is Ribosomal protein L11 methyltransferase from Brucella melitensis biotype 2 (strain ATCC 23457).